The chain runs to 328 residues: tRNA dimethylallyltransferase (328 aa).

23 to 30 (GPTASGKS) contributes to the ATP binding site. 25–30 (TASGKS) contacts substrate. The segment at 48-51 (DSMQ) is interaction with substrate tRNA.

The protein belongs to the IPP transferase family. Monomer. Mg(2+) is required as a cofactor.

The catalysed reaction is adenosine(37) in tRNA + dimethylallyl diphosphate = N(6)-dimethylallyladenosine(37) in tRNA + diphosphate. Functionally, catalyzes the transfer of a dimethylallyl group onto the adenine at position 37 in tRNAs that read codons beginning with uridine, leading to the formation of N6-(dimethylallyl)adenosine (i(6)A). The protein is tRNA dimethylallyltransferase of Rhodopseudomonas palustris (strain BisA53).